Reading from the N-terminus, the 276-residue chain is RNA-binding protein pno-1 (276 aa).

Disordered regions lie at residues 1–30 and 62–101; these read MATSSSAFDDEFPMEEGMPELLDDEDVPST and DVVMEDISQPDDSTTDSPDADAEQKPTKRSKGSKGESRVV. Acidic residues predominate over residues 8–27; sequence FDDEFPMEEGMPELLDDEDV. In terms of domain architecture, KH spans 197-249; the sequence is GDHVSRAIGRIAGKDGRTKLVIENTTKTRIVVANTKIHILGAYQNLKLARNAV.

Belongs to the PNO1 family. Part of the small subunit (SSU) processome, composed of more than 70 proteins and the RNA chaperone small nucleolar RNA (snoRNA) U3.

It is found in the nucleus. Its subcellular location is the nucleolus. In terms of biological role, part of the small subunit (SSU) processome, first precursor of the small eukaryotic ribosomal subunit. During the assembly of the SSU processome in the nucleolus, many ribosome biogenesis factors, an RNA chaperone and ribosomal proteins associate with the nascent pre-rRNA and work in concert to generate RNA folding, modifications, rearrangements and cleavage as well as targeted degradation of pre-ribosomal RNA by the RNA exosome. Positively regulates dimethylation of two adjacent adenosines in the loop of a conserved hairpin near the 3'-end of 18S rRNA. In Caenorhabditis briggsae, this protein is RNA-binding protein pno-1.